A 343-amino-acid polypeptide reads, in one-letter code: Glycerol-3-phosphate dehydrogenase [NAD(P)+] (343 aa).

NADPH contacts are provided by Ser-15, Phe-16, Arg-36, and Lys-110. Positions 110 and 138 each coordinate sn-glycerol 3-phosphate. NADPH is bound at residue Ala-142. The sn-glycerol 3-phosphate site is built by Lys-193, Asp-246, Ser-256, Arg-257, and Asn-258. The Proton acceptor role is filled by Lys-193. Arg-257 is an NADPH binding site. Residue Glu-283 coordinates NADPH.

It belongs to the NAD-dependent glycerol-3-phosphate dehydrogenase family.

Its subcellular location is the cytoplasm. The enzyme catalyses sn-glycerol 3-phosphate + NAD(+) = dihydroxyacetone phosphate + NADH + H(+). The catalysed reaction is sn-glycerol 3-phosphate + NADP(+) = dihydroxyacetone phosphate + NADPH + H(+). It functions in the pathway membrane lipid metabolism; glycerophospholipid metabolism. Catalyzes the reduction of the glycolytic intermediate dihydroxyacetone phosphate (DHAP) to sn-glycerol 3-phosphate (G3P), the key precursor for phospholipid synthesis. In Alcanivorax borkumensis (strain ATCC 700651 / DSM 11573 / NCIMB 13689 / SK2), this protein is Glycerol-3-phosphate dehydrogenase [NAD(P)+].